A 149-amino-acid polypeptide reads, in one-letter code: Protein FAM72A (149 aa).

The protein belongs to the FAM72 family. In terms of assembly, interacts with UNG. In terms of tissue distribution, expressed at high levels in stomach and also in kidney and, at low levels, in heart (at protein level). In the stomach, highly expressed in foveolar cells, parietal cells and chief cells (at protein level). In kidney, expressed in endothelial cells, mesangial and epithelial cells (parietal and visceral epithelium) around glomerulus (at protein level).

It is found in the cytoplasm. The protein resides in the mitochondrion. In terms of biological role, may play a role in the regulation of cellular reactive oxygen species metabolism. May participate in cell growth regulation. The sequence is that of Protein FAM72A (Fam72a) from Rattus norvegicus (Rat).